Reading from the N-terminus, the 570-residue chain is Urease subunit alpha (570 aa).

Residues 132 to 570 (GGIDTHVHFI…LPMAQRYFLF (439 aa)) enclose the Urease domain. H137 and H139 together coordinate Ni(2+). Residues H139 and A170 each contribute to the substrate site. Residue K220 participates in Ni(2+) binding. The residue at position 220 (K220) is an N6-carboxylysine. The substrate site is built by H222 and H249. Ni(2+) contacts are provided by H249 and H275. The active-site Proton donor is the H323. D363 lines the Ni(2+) pocket. Substrate is bound at residue A366.

Belongs to the metallo-dependent hydrolases superfamily. Urease alpha subunit family. As to quaternary structure, heterotrimer of UreA (gamma), UreB (beta) and UreC (alpha) subunits. Three heterotrimers associate to form the active enzyme. The cofactor is Ni cation. Carboxylation allows a single lysine to coordinate two nickel ions.

The protein localises to the cytoplasm. It catalyses the reaction urea + 2 H2O + H(+) = hydrogencarbonate + 2 NH4(+). It participates in nitrogen metabolism; urea degradation; CO(2) and NH(3) from urea (urease route): step 1/1. Inhibited by fluoride. The chain is Urease subunit alpha from Sporosarcina pasteurii (Bacillus pasteurii).